A 1453-amino-acid chain; its full sequence is Collagen alpha-1(I) chain (1453 aa).

The first 22 residues, 1–22 (MFSFVDLRLLLLLGATALLTHG), serve as a signal peptide directing secretion. Positions 23 to 151 (QEDIPEVSCI…PPGLGGNFAS (129 aa)) are cleaved as a propeptide — N-terminal propeptide. In terms of domain architecture, VWFC spans 29–87 (VSCIHNGLRVPNGETWKPDVCLICICHNGTAVCDGVLCKEDLDCPNPQKREGECCPFCP). Residue Asn-56 is glycosylated (N-linked (GlcNAc...) asparagine). The interval 97–1206 (VIGVEGPKGD…KSQDGGRYYR (1110 aa)) is disordered. Pro residues-rich tracts occupy residues 109-118 (PQGPRGPVGP) and 128-143 (PGLP…PGPP). Residue Gln-152 is modified to Pyrrolidone carboxylic acid. Residues 152-167 (QMSYGYDEKSAGVSVP) are nonhelical region (N-terminal). Lys-160 is modified (allysine). Ser-161 carries the phosphoserine modification. The triple-helical region stretch occupies residues 168 to 1181 (GPMGPSGPRG…PGPPGPPGPP (1014 aa)). Pro-179, Pro-182, Pro-185, Pro-194, Pro-197, Pro-200, Pro-215, Pro-230, Pro-236, Pro-245, and Pro-251 each carry 4-hydroxyproline. The span at 187-206 (PQGFQGPPGEPGEPGASGPM) shows a compositional bias: low complexity. Residues 218–232 (NGDDGEAGKPGRPGE) are compositionally biased toward basic and acidic residues. Residue Lys-254 is modified to 5-hydroxylysine; alternate. Lys-254 is a glycosylation site (O-linked (Gal...) hydroxylysine; alternate). Ser-260 carries the phosphoserine modification. 4-hydroxyproline is present on residues Pro-278, Pro-281, Pro-287, Pro-296, and Pro-302. The segment covering 307–320 (SAGARGNDGAVGAA) has biased composition (low complexity). Residues 322–334 (PPGPTGPTGPPGF) show a composition bias toward pro residues. 4-hydroxyproline is present on residues Pro-323, Pro-332, Pro-335, Pro-362, Pro-365, Pro-377, Pro-383, Pro-392, Pro-398, Pro-401, and Pro-416. The segment covering 335–361 (PGAAGAKGEAGPQGARGSEGPQGVRGE) has biased composition (low complexity). The segment covering 368–418 (AGAAGPAGNPGADGQPGAKGANGAPGIAGAPGFPGARGPSGPQGPSGAPGP) has biased composition (low complexity). At Lys-419 the chain carries 5-hydroxylysine. Residues Pro-425, Pro-428, Pro-440, Pro-449, Pro-464, Pro-470, Pro-479, and Pro-485 each carry the 4-hydroxyproline modification. Residues 474-483 (GERGGPGSRG) are compositionally biased toward gly residues. 5-hydroxylysine is present on Lys-494. 28 positions are modified to 4-hydroxyproline: Pro-503, Pro-512, Pro-518, Pro-524, Pro-533, Pro-536, Pro-545, Pro-554, Pro-560, Pro-572, Pro-581, Pro-590, Pro-593, Pro-611, Pro-629, Pro-635, Pro-641, Pro-647, Pro-653, Pro-659, Pro-671, Pro-680, Pro-692, Pro-704, Pro-707, Pro-713, Pro-719, and Pro-728. Residues 527–566 (KGLTGSPGSPGPDGKTGPPGPAGQDGRPGPAGPPGARGQA) are compositionally biased toward low complexity. Positions 623–650 (QGPAGSPGFQGLPGPAGPPGEAGKPGEQ) are enriched in low complexity. Low complexity-rich tracts occupy residues 685–695 (PRGNNGAPGND) and 703–716 (APGA…PGLQ). The Cell attachment site signature appears at 734 to 736 (RGD). Lys-740 bears the 5-hydroxylysine mark. 3 positions are modified to 4-hydroxyproline: Pro-746, Pro-761, and Pro-767. Low complexity predominate over residues 773–787 (TGPSGPAGPTGARGA). Ser-776 carries the post-translational modification Phosphoserine. 8 positions are modified to 4-hydroxyproline: Pro-788, Pro-794, Pro-797, Pro-806, Pro-812, Pro-830, Pro-839, and Pro-848. Positions 800-815 (AGFAGPPGADGQPGAK) are enriched in low complexity. The segment covering 829–841 (PPGPAGPAGPPGP) has biased composition (pro residues). The span at 842 to 872 (IGNVGAPGPKGSRGAAGPPGATGFPGAAGRV) shows a compositional bias: low complexity. Lys-851 carries the post-translational modification 5-hydroxylysine. 4-hydroxyproline occurs at positions 860 and 866. Residue Pro-874 is modified to 3-hydroxyproline. Residues Pro-875, Pro-884, Pro-887, Pro-908, Pro-917, Pro-926, Pro-935, Pro-953, Pro-962, Pro-965, Pro-971, Pro-986, Pro-992, Pro-998, Pro-1007, and Pro-1013 each carry the 4-hydroxyproline modification. Positions 901 to 910 (ETGPAGRPGE) are enriched in low complexity. A compositionally biased stretch (low complexity) spans 920-935 (AGEKGSPGADGPAGSP). A compositionally biased stretch (pro residues) spans 985–995 (PPGPMGPPGLA). Low complexity predominate over residues 997-1012 (PPGESGREGSPGAEGS). At Lys-1022 the chain carries 5-hydroxylysine. Positions 1031–1046 (AGPPGAPGAPGAPGPV) are enriched in pro residues. Residues Pro-1034, Pro-1037, and Pro-1040 each carry the 4-hydroxyproline modification. Low complexity predominate over residues 1067–1081 (IGPAGARGPAGPQGP). The short motif at 1082–1084 (RGD) is the Cell attachment site element. Residues 1082–1096 (RGDKGETGEQGDRGI) are compositionally biased toward basic and acidic residues. Lys-1085 bears the 5-hydroxylysine mark. A 5-hydroxylysine; alternate modification is found at Lys-1097. Lys-1097 carries an O-linked (Gal...) hydroxylysine; alternate glycan. Positions 1102-1148 (FSGLQGPPGSPGSPGEQGPSGASGPAGPRGPPGSAGSPGKDGLNGLP) are enriched in low complexity. 4-hydroxyproline is present on residues Pro-1109, Pro-1112, Pro-1115, Pro-1133, and Pro-1148. Pro-1153 bears the 3-hydroxyproline mark. Pro-1154 carries the post-translational modification 4-hydroxyproline. A compositionally biased stretch (pro residues) spans 1166–1181 (AGPPGPPGPPGPPGPP). Pro-1168 is subject to 3-hydroxyproline. The residue at position 1169 (Pro-1169) is a 4-hydroxyproline. At Pro-1171 the chain carries 3-hydroxyproline. At Pro-1172 the chain carries 4-hydroxyproline. Pro-1174 bears the 3-hydroxyproline mark. A 4-hydroxyproline mark is found at Pro-1175, Pro-1178, and Pro-1181. The major antigenic determinant (of neutral salt-extracted rat skin collagen) stretch occupies residues 1176-1186 (GPPGPPSGGYD). Residues 1182 to 1207 (SGGYDFSFLPQPPQEKSQDGGRYYRA) are nonhelical region (C-terminal). An Allysine modification is found at Lys-1197. Over residues 1197-1206 (KSQDGGRYYR) the composition is skewed to basic and acidic residues. The propeptide at 1208–1453 (DDANVVRDRD…GMDIGPACFV (246 aa)) is C-terminal propeptide. A Fibrillar collagen NC1 domain is found at 1218–1453 (LEVDTTLKSL…GMDIGPACFV (236 aa)). 3 disulfides stabilise this stretch: Cys-1248–Cys-1280, Cys-1288–Cys-1451, and Cys-1359–Cys-1404. Ca(2+) is bound by residues Asp-1266, Asn-1268, Gln-1269, Cys-1271, and Asp-1274. An N-linked (GlcNAc...) asparagine glycan is attached at Asn-1354.

The protein belongs to the fibrillar collagen family. In terms of assembly, trimers of one alpha 2(I) and two alpha 1(I) chains. Interacts with MRC2. Interacts with TRAM2. Interacts with MFAP4 in a Ca (2+)-dependent manner. In terms of processing, contains mostly 4-hydroxyproline. Proline residues at the third position of the tripeptide repeating unit (G-X-Y) are hydroxylated in some or all of the chains. Contains 3-hydroxyproline at a few sites. This modification occurs on the first proline residue in the sequence motif Gly-Pro-Hyp, where Hyp is 4-hydroxyproline. Post-translationally, lysine residues at the third position of the tripeptide repeating unit (G-X-Y) are 5-hydroxylated in some or all of the chains. In terms of processing, O-glycosylated on hydroxylated lysine residues. The O-linked glycan consists of a Glc-Gal disaccharide. As to expression, forms the fibrils of tendon, ligaments and bones. In bones the fibrils are mineralized with calcium hydroxyapatite.

Its subcellular location is the secreted. The protein localises to the extracellular space. It localises to the extracellular matrix. Type I collagen is a member of group I collagen (fibrillar forming collagen). This Rattus norvegicus (Rat) protein is Collagen alpha-1(I) chain (Col1a1).